We begin with the raw amino-acid sequence, 747 residues long: Mitochondrial inner membrane i-AAA protease supercomplex subunit YME1 (747 aa).

Basic and acidic residues predominate over residues 51 to 64 (KNSGEMPPKKEADS). The segment at 51–92 (KNSGEMPPKKEADSSGKASNKSTISSIDNSQPPPPSNTNDKT) is disordered. Over residues 66–80 (GKASNKSTISSIDNS) the composition is skewed to polar residues. ATP is bound at residue 321–328 (GPPGTGKT). His-540 lines the Zn(2+) pocket. Glu-541 is an active-site residue. Residues His-544 and Asp-618 each coordinate Zn(2+). Residues 718–747 (STNTVVEGPDSDERKDIGDDKPKIPTMLNA) form a disordered region. Over residues 728–740 (SDERKDIGDDKPK) the composition is skewed to basic and acidic residues.

It in the N-terminal section; belongs to the AAA ATPase family. The protein in the C-terminal section; belongs to the peptidase M41 family. As to quaternary structure, component of the mitochondrial inner membrane i-AAA protease supercomplex composed of MGR1, MGR3 and YME1. Interacts directly with MGR1. Zn(2+) serves as cofactor.

Its subcellular location is the mitochondrion inner membrane. In terms of biological role, catalytic subunit of the mitochondrial inner membrane i-AAA protease supercomplex required for mitochondrial inner membrane protein turnover. The protease is probably ATP-dependent. Important to maintain the integrity of the mitochondrial compartment. Required both for the degradation of unassembled subunit 2 of cytochrome c oxidase (COX2) and for efficient assembly of mitochondrial respiratory chain. Binds unfolded substrates in an ATPase-independent manner; binding of folded COX2, a physiological substrate, requires an active ATPase but when COX2 is destabilized an active ATPase is no longer necessary. May process ATG32. In Saccharomyces cerevisiae (strain ATCC 204508 / S288c) (Baker's yeast), this protein is Mitochondrial inner membrane i-AAA protease supercomplex subunit YME1 (YME1).